Consider the following 135-residue polypeptide: Ribonuclease P protein component (135 aa).

It belongs to the RnpA family. In terms of assembly, consists of a catalytic RNA component (M1 or rnpB) and a protein subunit.

It catalyses the reaction Endonucleolytic cleavage of RNA, removing 5'-extranucleotides from tRNA precursor.. RNaseP catalyzes the removal of the 5'-leader sequence from pre-tRNA to produce the mature 5'-terminus. It can also cleave other RNA substrates such as 4.5S RNA. The protein component plays an auxiliary but essential role in vivo by binding to the 5'-leader sequence and broadening the substrate specificity of the ribozyme. The polypeptide is Ribonuclease P protein component (Pseudomonas paraeruginosa (strain DSM 24068 / PA7) (Pseudomonas aeruginosa (strain PA7))).